The chain runs to 425 residues: ADP-ribose glycohydrolase MACROD2 (425 aa).

The region spanning 59-240 (QETSQVKKSL…IYKKKMNEFF (182 aa)) is the Macro domain. Substrate-binding positions include 77–79 (GDI), 90–92 (AAN), and 97–102 (GGGGVD). Lysine 170 participates in a covalent cross-link: Glycyl lysine isopeptide (Lys-Gly) (interchain with G-Cter in ubiquitin). Residues 185 to 191 (ISTGIYG) and phenylalanine 224 contribute to the substrate site. The segment at 243–425 (DDNNEEEEDV…EAKEQRNGTK (183 aa)) is disordered. Residues 244-262 (DNNEEEEDVEMKEDSDENG) show a composition bias toward acidic residues. Residues 302-343 (EDFAKDENITKGGEVTDHSVRDQDHPDGQENDSTKNEIKIET) show a composition bias toward basic and acidic residues. Over residues 344–360 (ESQSSYMETEELSSNQE) the composition is skewed to polar residues. 2 stretches are compositionally biased toward basic and acidic residues: residues 381–391 (EGEKAPGEDTP) and 415–425 (DEAKEQRNGTK).

The protein belongs to the MacroD-type family. MacroD1/2-like subfamily. In terms of assembly, interacts with ADP-ribosylated PARP1.

It is found in the nucleus. The catalysed reaction is 2''-O-acetyl-ADP-D-ribose + H2O = ADP-D-ribose + acetate + H(+). It catalyses the reaction 4-O-(ADP-D-ribosyl)-L-aspartyl-[protein] + H2O = L-aspartyl-[protein] + ADP-D-ribose + H(+). It carries out the reaction 5-O-(ADP-D-ribosyl)-L-glutamyl-[protein] + H2O = L-glutamyl-[protein] + ADP-D-ribose + H(+). The enzyme catalyses alpha-NAD(+) + H2O = ADP-D-ribose + nicotinamide + H(+). With respect to regulation, subject to product inhibition by ADP-ribose. In terms of biological role, removes ADP-ribose from aspartate and glutamate residues in proteins bearing a single ADP-ribose moiety. Inactive towards proteins bearing poly-ADP-ribose. Deacetylates O-acetyl-ADP ribose, a signaling molecule generated by the deacetylation of acetylated lysine residues in histones and other proteins. The protein is ADP-ribose glycohydrolase MACROD2 of Homo sapiens (Human).